The chain runs to 341 residues: MRSVPEDFTTLISDLETFLTDVLKGENLSKKAKEKKDAFIKRIKDVKTSYAQEFKDRRDEEFPEPDEADTNDGGSLHSEQTDRDDENAYDGVQQSPPVAAQDLQAVLKSGYLEKRRKDHSFFGNEWQKRWCALNNSIFYYYGSEKDKQQKGEFNIVGYTVKMNNTLRKDAKRDCCFEVSAPDKRVYQFCAASEKEAKEWVEHIDFLIKDLGGIIPEDEEEYDDCLSMSQSEVAILPDDDIYEELPEEDVPQPSKPKVTLVNKPPPPATPVTAAVNKSTDYANYFQGLWDCIGDQPDELSFKRGDTIYILSKEYDMFGWWVGEMKGVIGIVPKEYLLELYVL.

The disordered stretch occupies residues F54–S95. The span at E61–T70 shows a compositional bias: acidic residues. The region spanning A105–K208 is the PH domain. The interval E246 to P265 is disordered. The region spanning D279–V340 is the SH3 domain.

This sequence belongs to the SKAP family. Phosphorylated on tyrosines.

The protein resides in the cytoplasm. May be involved in B-cell and macrophage adhesion processes. May play a role in src signaling pathway. This chain is Src kinase-associated phosphoprotein 2 (skap2), found in Danio rerio (Zebrafish).